The chain runs to 636 residues: Interleukin-27 receptor subunit alpha (636 aa).

Positions 1 to 32 (MRGGRGAPFWLWPLPKLALLPLLWVLFQRTRP) are cleaved as a signal peptide. Topologically, residues 33 to 516 (QGSAGPLQCY…HLPDNTLRWK (484 aa)) are extracellular. N-linked (GlcNAc...) asparagine glycans are attached at residues Asn-51 and Asn-76. The 101-residue stretch at 131-231 (PRLGPDVDFS…PILSFQTPPS (101 aa)) folds into the Fibronectin type-III 1 domain. The WSXWS motif motif lies at 217–221 (WGEWS). 5 N-linked (GlcNAc...) asparagine glycosylation sites follow: Asn-302, Asn-311, Asn-374, Asn-382, and Asn-467. Fibronectin type-III domains are found at residues 322 to 417 (APRS…LAPL) and 419 to 511 (GPTL…LPDN). Residues 517–537 (VLPGILFLWGLFLLGCGLSLA) traverse the membrane as a helical segment. At 538 to 636 (TSGRCYHLRH…LGPPRPQVLA (99 aa)) the chain is on the cytoplasmic side. The Box 1 motif signature appears at 554–562 (VWEKVPDPA). Positions 587–636 (EVEEMEPPPVMESSQPAQATAPLDSGYEKHFLPTPEELGLLGPPRPQVLA) are disordered. Low complexity predominate over residues 618 to 628 (LPTPEELGLLG).

It belongs to the type I cytokine receptor family. Type 2 subfamily. As to quaternary structure, component of a receptor complex composed of IL6ST/GP130, IL27RA/WSX1 and CNTFR which interacts with the neuroprotective peptide humanin. In terms of tissue distribution, highly expressed in lymphoid tissues such as spleen, lymph nodes and peripheral blood leukocytes. Weakly expressed in other tissues examined including heart, brain, fetal and adult lung, liver, skeletal muscle, kidney, pancreas, prostate, testis, ovary, small intestine, kidney and colon. In the lymphoid system, higher level expression in CD4+ T-cell subsets than in CD8+ T-cell subsets. Also weaker expression in CD19+ B-cells and monocytes.

The protein localises to the membrane. Functionally, receptor for IL27. Requires IL6ST/GP130 to mediate signal transduction in response to IL27. This signaling system acts through STAT3 and STAT1. Acts as a receptor for the neuroprotective peptide humanin as part of a complex with IL6ST/GP130 and CNTFR. Involved in the regulation of Th1-type immune responses. Also appears to be involved in innate defense mechanisms. The protein is Interleukin-27 receptor subunit alpha (IL27RA) of Homo sapiens (Human).